Reading from the N-terminus, the 1072-residue chain is Guanylyl cyclase C (1072 aa).

Residues 1–22 (MTSLLGLAVRLLLFQPTLMFWA) form the signal peptide. Over 23-429 (SQVRQKCHNG…PNDVPGLGPQ (407 aa)) the chain is Extracellular. N-linked (GlcNAc...) asparagine glycosylation is found at Asn31, Asn74, Asn78, Asn187, Asn194, Asn306, and Asn401. Residues 430–453 (ILMIAVFTLTGIVVVLLLIALLVL) form a helical membrane-spanning segment. The Cytoplasmic portion of the chain corresponds to 454-1072 (RKYRRDHELR…NNSDHDSTYF (619 aa)). The 261-residue stretch at 488-748 (LKIDDDRRRD…KIESTLAKIF (261 aa)) folds into the Protein kinase domain. Residues 823-953 (TIYFSDIVGF…DTVNTASRME (131 aa)) enclose the Guanylate cyclase domain.

The protein belongs to the adenylyl cyclase class-4/guanylyl cyclase family. Homotrimer. Interacts via its C-terminal region with PDZK2. Interacts with the lectin chaperone VIP36. Glycosylation at Asn-74 and/or Asn-78 is required for interaction with VIP36 while glycosylation at Asn-401 modulates ligand-mediated GC-C activation.

It localises to the cell membrane. It is found in the endoplasmic reticulum membrane. It carries out the reaction GTP = 3',5'-cyclic GMP + diphosphate. In terms of biological role, guanylyl cyclase that catalyzes synthesis of cyclic GMP (cGMP) from GTP. Receptor for the E.coli heat-stable enterotoxin; E.coli enterotoxin markedly stimulates the accumulation of cGMP in mammalian cells expressing GUCY2C. The chain is Guanylyl cyclase C (Gucy2c) from Rattus norvegicus (Rat).